We begin with the raw amino-acid sequence, 85 residues long: Large ribosomal subunit protein bL27 (85 aa).

Positions 1 to 21 (MAHKKGVGSSRNGRDSDGQRL) are disordered.

This sequence belongs to the bacterial ribosomal protein bL27 family.

The protein is Large ribosomal subunit protein bL27 of Citrifermentans bemidjiense (strain ATCC BAA-1014 / DSM 16622 / JCM 12645 / Bem) (Geobacter bemidjiensis).